The following is a 125-amino-acid chain: U-scoloptoxin(05)-Er1a (125 aa).

An N-terminal signal peptide occupies residues 1–20; that stretch reads MLSLGVSIFLLVFLIPENSG.

It belongs to the scoloptoxin-05 family. Contains 4 disulfide bonds. As to expression, expressed by the venom gland.

The protein localises to the secreted. This is U-scoloptoxin(05)-Er1a from Ethmostigmus rubripes (Giant centipede).